The sequence spans 976 residues: Leucine--tRNA ligase (976 aa).

The 'HIGH' region motif lies at Pro63–His74. A 'KMSKS' region motif is present at residues Lys745–Ser749. An ATP-binding site is contributed by Lys748.

Belongs to the class-I aminoacyl-tRNA synthetase family.

It localises to the cytoplasm. It carries out the reaction tRNA(Leu) + L-leucine + ATP = L-leucyl-tRNA(Leu) + AMP + diphosphate. The protein is Leucine--tRNA ligase of Corynebacterium jeikeium (strain K411).